A 245-amino-acid chain; its full sequence is Intron-associated endonuclease 1 (245 aa).

The GIY-YIG domain maps to 1–88; the sequence is MKSGIYQIKN…IKELNSKING (88 aa).

It to endonucleases of group I introns of fungi and phage. The cofactor is Mg(2+).

In terms of biological role, this endonuclease is specific to the thymidylate synthase (td) gene splice junction and is involved in intron homing. The polypeptide is Intron-associated endonuclease 1 (ITEVIR) (Enterobacteria phage T4 (Bacteriophage T4)).